An 84-amino-acid polypeptide reads, in one-letter code: U2-theraphotoxin-Cg1b 1 (84 aa).

An N-terminal signal peptide occupies residues 1-21; the sequence is MKVSVLITLAVWGVMFLLTSA. The propeptide occupies 22–48; it reads QERGSDQMDSPAWLKSMERIFQSEERE. Cystine bridges form between Cys49/Cys63, Cys56/Cys68, and Cys62/Cys76.

Belongs to the neurotoxin 10 (Hwtx-1) family. 06 (F4b) subfamily. Expressed by the venom gland.

The protein resides in the secreted. Functionally, probable ion channel inhibitor. This Chilobrachys guangxiensis (Chinese earth tiger tarantula) protein is U2-theraphotoxin-Cg1b 1.